A 440-amino-acid polypeptide reads, in one-letter code: APO protein 2, chloroplastic (440 aa).

A chloroplast-targeting transit peptide spans 1 to 62; it reads MSITYSAISF…SLQLNSRVVL (62 aa). Over residues 106–115 the composition is skewed to basic and acidic residues; sequence ARERVKNNKD. The segment at 106–126 is disordered; sequence ARERVKNNKDKPKRPLPPPKN. APO domains are found at residues 162–247 and 332–417; these read ACGW…EIPE and VCGY…VVPE.

This sequence belongs to the APO family.

Its subcellular location is the plastid. It is found in the chloroplast. In terms of biological role, may be involved in the stable assembly of several 4Fe-4S cluster-containing complexes of chloroplasts. The protein is APO protein 2, chloroplastic (APO2) of Arabidopsis thaliana (Mouse-ear cress).